A 3391-amino-acid polypeptide reads, in one-letter code: Genome polyprotein (3391 aa).

Residues 1 to 15 are interaction with host EXOC1; it reads MNDQRKKAKNTPFNM. Over 1–101 the chain is Cytoplasmic; it reads MNDQRKKAKN…LNILNRRRRS (101 aa). Positions 37–72 are hydrophobic; homodimerization of capsid protein C; it reads MLQGRGPLKLYMALVAFLRFLTIPPTAGILKRWGTI. The propeptide at 101–114 is ER anchor for the capsid protein C, removed in mature form by serine protease NS3; that stretch reads SAGMIIMLIPTVMA. Residues 102-119 traverse the membrane as a helical segment; it reads AGMIIMLIPTVMAFHLTT. The Extracellular segment spans residues 120-242; that stretch reads RNGEPHMIVS…HVQRIETWIL (123 aa). A glycan (N-linked (GlcNAc...) asparagine; by host) is linked at asparagine 183. A helical membrane pass occupies residues 243 to 260; the sequence is RHPGFTMMAAILAYTIGT. Threonine 261 is a topological domain (cytoplasmic). A helical membrane pass occupies residues 262-280; that stretch reads HFQRALIFILLTAVTPSMT. Residues 281-725 lie on the Extracellular side of the membrane; the sequence is MRCIGMSNRD…LHQVFGAIYG (445 aa). Disulfide bonds link cysteine 283–cysteine 310, cysteine 340–cysteine 401, cysteine 354–cysteine 385, and cysteine 372–cysteine 396. Asparagine 347 carries N-linked (GlcNAc...) asparagine; by host glycosylation. Residues 378 to 391 form a fusion peptide region; sequence DRGWGNGCGLFGKG. Asparagine 433 carries N-linked (GlcNAc...) asparagine; by host glycosylation. 2 disulfides stabilise this stretch: cysteine 465–cysteine 565 and cysteine 582–cysteine 613. A helical membrane pass occupies residues 726-746; the sequence is AAFSGVSWTMKILIGVIITWI. The Cytoplasmic portion of the chain corresponds to 747–752; sequence GMNSRS. The chain crosses the membrane as a helical span at residues 753-773; that stretch reads TSLSVTLVLVGIVTLYLGVMV. Topologically, residues 774–1195 are extracellular; that stretch reads QADSGCVVSW…MVGATMTDDI (422 aa). Cystine bridges form between cysteine 779–cysteine 790, cysteine 830–cysteine 918, cysteine 954–cysteine 998, cysteine 1055–cysteine 1104, cysteine 1066–cysteine 1088, and cysteine 1087–cysteine 1091. Residues asparagine 905 and asparagine 982 are each glycosylated (N-linked (GlcNAc...) asparagine; by host). 2 N-linked (GlcNAc...) asparagine; by host glycosylation sites follow: asparagine 1134 and asparagine 1174. The chain crosses the membrane as a helical span at residues 1196-1220; the sequence is GMGVTYLALLAAFKVRPTFAAGLLL. The Cytoplasmic segment spans residues 1221–1226; it reads RKLTSK. Residues 1227–1245 traverse the membrane as a helical segment; sequence ALMMTTIGIVLSSQSTTPE. The Lumenal portion of the chain corresponds to 1246-1269; sequence TILELTDALALGMMVLKMVRNMEK. A helical membrane pass occupies residues 1270 to 1290; that stretch reads YQLAVTIMAILCVPNAVILQN. Alanine 1291 is a topological domain (cytoplasmic). A helical transmembrane segment spans residues 1292–1310; it reads WKVSCTILAVVSVSPLFLT. At 1311–1317 the chain is on the lumenal side; that stretch reads SSQQKTD. The helical transmembrane segment at 1318-1338 threads the bilayer; the sequence is WIPLALTIKGLNPTAIFLTTL. At 1339 to 1346 the chain is on the cytoplasmic side; the sequence is SRTSKKRS. Residues 1347–1367 traverse the membrane as a helical segment; it reads WPLNEAIMAVGMVSILASSLL. Residues 1368–1370 lie on the Lumenal side of the membrane; sequence KND. The helical transmembrane segment at 1371 to 1391 threads the bilayer; that stretch reads IPMTGPLVAGGPLTVCYVLTG. The Cytoplasmic segment spans residues 1392-1447; sequence RSADLELERAADVKWEDQAEISGSSPILSITISEDGSMSIKNEEEEQTLTILIRTG. Positions 1398-1437 are interacts with and activates NS3 protease; the sequence is LERAADVKWEDQAEISGSSPILSITISEDGSMSIKNEEEE. Residues 1448–1468 constitute an intramembrane region (helical); that stretch reads LLVISGLFPVSIPITAAAWYL. Residues 1469–2147 are Cytoplasmic-facing; it reads WEVKKQRAGV…LSELPETLET (679 aa). The region spanning 1476–1653 is the Peptidase S7 domain; sequence AGVLWDVPSP…EKSIEDNPEI (178 aa). Residues histidine 1526, aspartate 1550, and serine 1610 each act as charge relay system; for serine protease NS3 activity in the active site. A Helicase ATP-binding domain is found at 1655–1811; sequence DDIFRKRRLT…QSNAPIIDEE (157 aa). Residues 1659 to 1662 are important for RNA-binding; it reads RKRR. 1668-1675 is a binding site for ATP; that stretch reads LHPGAGKT. Positions 1759–1762 match the DEAH box motif; the sequence is DEAH. Positions 1821–1988 constitute a Helicase C-terminal domain; sequence SGHEWVTDFK…IIPSMFEPER (168 aa). Lysine 1863 carries the post-translational modification N6-acetyllysine; by host. The helical transmembrane segment at 2148–2168 threads the bilayer; the sequence is LLLLTLLATVTGGILLFLMSG. At 2169–2170 the chain is on the lumenal side; sequence RG. Residues 2171 to 2191 constitute an intramembrane region (helical); the sequence is IGKMTLGMCCIITASILLWYA. Position 2192 (glutamine 2192) is a topological domain, lumenal. A helical transmembrane segment spans residues 2193–2213; sequence IQPHWIAASIILEFFLIVLLI. Topologically, residues 2214–2228 are cytoplasmic; that stretch reads PEPEKQRTPQDNQLT. Residues 2229 to 2249 form a helical membrane-spanning segment; the sequence is YVVIAILTVVAATMANEMGFL. The Lumenal segment spans residues 2250–2274; the sequence is EKTKKDLGLGSIATQQPESNILDID. An intramembrane region (helical) is located at residues 2275–2295; it reads LRPASAWTLYAVATTFVTPML. Topologically, residues 2296–2316 are lumenal; sequence RHSIENSSVNVSLTAIANQAT. Residues asparagine 2301 and asparagine 2305 are each glycosylated (N-linked (GlcNAc...) asparagine; by host). The segment at residues 2317–2337 is an intramembrane region (helical); sequence VLMGLGKGWPLSKMDIGVPLL. Residues 2338-2347 are Lumenal-facing; that stretch reads AIGCYSQVNP. Residues 2348-2368 traverse the membrane as a helical segment; that stretch reads TTLTAALFLLVAHYAIIGPAL. At 2369 to 2413 the chain is on the cytoplasmic side; sequence QAKASREAQKRAAAGIMKNPTVDGITVIDLDPIPYDPKFEKQLGQ. The helical transmembrane segment at 2414 to 2434 threads the bilayer; it reads VMLLVLCVTQVLMMRTTWALC. Residues 2435–2459 are Lumenal-facing; the sequence is EVLTLATGPISTLWEGNPGRFWNTT. Residue asparagine 2457 is glycosylated (N-linked (GlcNAc...) asparagine; by host). Residues 2460-2480 traverse the membrane as a helical segment; it reads IAVSMANIFRGSYLAGAGLLF. Residues 2481 to 3391 lie on the Cytoplasmic side of the membrane; it reads SIMKNTTNAR…REEEEAGVLW (911 aa). Residues 2493-2755 form the mRNA cap 0-1 NS5-type MT domain; that stretch reads TGNIGETLGE…DVDLGSGTRN (263 aa). Serine 2547 contacts S-adenosyl-L-methionine. Serine 2547 carries the phosphoserine modification. Lysine 2552 serves as the catalytic For 2'-O-MTase activity. An SUMO-interacting motif motif is present at residues 2568–2571; sequence VVDL. Residues glycine 2577, tryptophan 2578, threonine 2595, lysine 2596, aspartate 2622, and valine 2623 each coordinate S-adenosyl-L-methionine. Residue aspartate 2637 is the For 2'-O-MTase activity of the active site. Isoleucine 2638 lines the S-adenosyl-L-methionine pocket. Catalysis depends on for 2'-O-MTase activity residues lysine 2672 and glutamate 2708. An S-adenosyl-L-methionine-binding site is contributed by tyrosine 2710. Zn(2+) contacts are provided by glutamate 2929, histidine 2933, cysteine 2938, and cysteine 2941. One can recognise a RdRp catalytic domain in the interval 3020–3169; it reads AMYADDTAGW…PLDDRLPSAL (150 aa). Zn(2+) is bound by residues histidine 3203, cysteine 3219, and cysteine 3338.

This sequence in the N-terminal section; belongs to the class I-like SAM-binding methyltransferase superfamily. mRNA cap 0-1 NS5-type methyltransferase family. Homodimer. Interacts (via N-terminus) with host EXOC1 (via C-terminus); this interaction results in EXOC1 degradation through the proteasome degradation pathway. As to quaternary structure, forms heterodimers with envelope protein E in the endoplasmic reticulum and Golgi. In terms of assembly, homodimer; in the endoplasmic reticulum and Golgi. Interacts with protein prM. Interacts with non-structural protein 1. Homodimer; Homohexamer when secreted. Interacts with envelope protein E. Interacts with host PRKAA1. As to quaternary structure, interacts (via N-terminus) with serine protease NS3. In terms of assembly, forms a heterodimer with serine protease NS3. May form homooligomers. Forms a heterodimer with NS2B. Interacts with NS4B. Interacts with unphosphorylated RNA-directed RNA polymerase NS5; this interaction stimulates RNA-directed RNA polymerase NS5 guanylyltransferase activity. Interacts with host SHFL. As to quaternary structure, interacts with host MAVS; this interaction inhibits the synthesis of IFN-beta. Interacts with host SHFL. Interacts with host AUP1; the interaction occurs in the presence of Dengue virus NS4B and induces lipophagy which facilitates production of virus progeny particles. May interact with host SRPRA and SEC61G. In terms of assembly, interacts with serine protease NS3. Homodimer. Interacts with host STAT2; this interaction inhibits the phosphorylation of the latter, and, when all viral proteins are present (polyprotein), targets STAT2 for degradation. Interacts with serine protease NS3. Interacts with host PAF1 complex; the interaction may prevent the recruitment of the PAF1 complex to interferon-responsive genes, and thus reduces the immune response. Post-translationally, specific enzymatic cleavages in vivo yield mature proteins. Cleavages in the lumen of endoplasmic reticulum are performed by host signal peptidase, whereas cleavages in the cytoplasmic side are performed by serine protease NS3. Signal cleavage at the 2K-4B site requires a prior NS3 protease-mediated cleavage at the 4A-2K site. In terms of processing, cleaved in post-Golgi vesicles by a host furin, releasing the mature small envelope protein M, and peptide pr. This cleavage is incomplete as up to 30% of viral particles still carry uncleaved prM. N-glycosylated. Post-translationally, N-glycosylated. The excreted form is glycosylated and this is required for efficient secretion of the protein from infected cells. In terms of processing, acetylated by host KAT5. Acetylation modulates NS3 RNA-binding and unwinding activities and plays an important positive role for viral replication. Sumoylation of RNA-directed RNA polymerase NS5 increases NS5 protein stability allowing proper viral RNA replication. Post-translationally, phosphorylated on serines residues. This phosphorylation may trigger NS5 nuclear localization.

It localises to the virion. It is found in the host nucleus. The protein resides in the host cytoplasm. The protein localises to the host perinuclear region. Its subcellular location is the secreted. It localises to the virion membrane. It is found in the host endoplasmic reticulum membrane. The protein resides in the host mitochondrion. The catalysed reaction is Selective hydrolysis of -Xaa-Xaa-|-Yaa- bonds in which each of the Xaa can be either Arg or Lys and Yaa can be either Ser or Ala.. It carries out the reaction RNA(n) + a ribonucleoside 5'-triphosphate = RNA(n+1) + diphosphate. It catalyses the reaction a ribonucleoside 5'-triphosphate + H2O = a ribonucleoside 5'-diphosphate + phosphate + H(+). The enzyme catalyses ATP + H2O = ADP + phosphate + H(+). The catalysed reaction is a 5'-end (5'-triphosphoguanosine)-ribonucleoside in mRNA + S-adenosyl-L-methionine = a 5'-end (N(7)-methyl 5'-triphosphoguanosine)-ribonucleoside in mRNA + S-adenosyl-L-homocysteine. It carries out the reaction a 5'-end (N(7)-methyl 5'-triphosphoguanosine)-ribonucleoside in mRNA + S-adenosyl-L-methionine = a 5'-end (N(7)-methyl 5'-triphosphoguanosine)-(2'-O-methyl-ribonucleoside) in mRNA + S-adenosyl-L-homocysteine + H(+). Its function is as follows. Plays a role in virus budding by binding to the cell membrane and gathering the viral RNA into a nucleocapsid that forms the core of a mature virus particle. During virus entry, may induce genome penetration into the host cytoplasm after hemifusion induced by the surface proteins. Can migrate to the cell nucleus where it modulates host functions. Overcomes the anti-viral effects of host EXOC1 by sequestering and degrading the latter through the proteasome degradation pathway. Inhibits RNA silencing by interfering with host Dicer. In terms of biological role, prevents premature fusion activity of envelope proteins in trans-Golgi by binding to envelope protein E at pH6.0. After virion release in extracellular space, gets dissociated from E dimers. Functionally, acts as a chaperone for envelope protein E during intracellular virion assembly by masking and inactivating envelope protein E fusion peptide. prM is the only viral peptide matured by host furin in the trans-Golgi network probably to avoid catastrophic activation of the viral fusion activity in acidic Golgi compartment prior to virion release. prM-E cleavage is inefficient, and many virions are only partially matured. These uncleaved prM would play a role in immune evasion. Its function is as follows. May play a role in virus budding. Exerts cytotoxic effects by activating a mitochondrial apoptotic pathway through M ectodomain. May display a viroporin activity. Binds to host cell surface receptor and mediates fusion between viral and cellular membranes. Envelope protein is synthesized in the endoplasmic reticulum in the form of heterodimer with protein prM. They play a role in virion budding in the ER, and the newly formed immature particle is covered with 60 spikes composed of heterodimer between precursor prM and envelope protein E. The virion is transported to the Golgi apparatus where the low pH causes dissociation of PrM-E heterodimers and formation of E homodimers. prM-E cleavage is inefficient, and many virions are only partially matured. These uncleaved prM would play a role in immune evasion. In terms of biological role, involved in immune evasion, pathogenesis and viral replication. Once cleaved off the polyprotein, is targeted to three destinations: the viral replication cycle, the plasma membrane and the extracellular compartment. Essential for viral replication. Required for formation of the replication complex and recruitment of other non-structural proteins to the ER-derived membrane structures. Excreted as a hexameric lipoparticle that plays a role against host immune response. Antagonizing the complement function. Binds to the host macrophages and dendritic cells. Inhibits signal transduction originating from Toll-like receptor 3 (TLR3). Functionally, involved in immune evasion, pathogenesis and viral replication. Once cleaved off the polyprotein, is targeted to three destinations: the viral replication cycle, the plasma membrane and the extracellular compartment. Essential for viral replication. Required for formation of the replication complex and recruitment of other non-structural proteins to the ER-derived membrane structures. Excreted as a hexameric lipoparticle that plays a role against host immune response. Antagonizing the complement function. Binds to the host macrophages and dendritic cells. Inhibits signal transduction originating from Toll-like receptor 3 (TLR3). Mediates complement activation, which may contribute to the pathogenesis of the vascular leakage that occurs in severe dengue disease. Activates autophagy through the AMPK/ERK/mTOR signaling pathway. Mechanistically, acts as the assembly platform for STK11-AMPK interactions and promotes STK11-AMPK interactions. In turn, promotes phosphorylation of the AMPK kinase structural domain and activates AMPK, thereby positively regulating the AMPK/ERK/mTOR signaling pathway and inducing autophagy. Its function is as follows. Component of the viral RNA replication complex that functions in virion assembly and antagonizes the host immune response. Required cofactor for the serine protease function of NS3. May have membrane-destabilizing activity and form viroporins. In terms of biological role, displays three enzymatic activities: serine protease, NTPase and RNA helicase. NS3 serine protease, in association with NS2B, performs its autocleavage and cleaves the polyprotein at dibasic sites in the cytoplasm: C-prM, NS2A-NS2B, NS2B-NS3, NS3-NS4A, NS4A-2K and NS4B-NS5. NS3 RNA helicase binds RNA and unwinds dsRNA in the 3' to 5' direction. Functionally, regulates the ATPase activity of the NS3 helicase activity. NS4A allows NS3 helicase to conserve energy during unwinding. Plays a role in the inhibition of the host innate immune response. Interacts with host MAVS and thereby prevents the interaction between RIGI and MAVS. In turn, IFN-beta production is impaired. Interacts with host AUP1 which mediates induction of lipophagy in host cells and facilitates production of virus progeny particles. Its function is as follows. Functions as a signal peptide for NS4B and is required for the interferon antagonism activity of the latter. Induces the formation of ER-derived membrane vesicles where the viral replication takes place. Inhibits interferon (IFN)-induced host STAT1 phosphorylation and nuclear translocation, thereby preventing the establishment of cellular antiviral state by blocking the IFN-alpha/beta pathway. In terms of biological role, replicates the viral (+) and (-) RNA genome, and performs the capping of genomes in the cytoplasm. NS5 methylates viral RNA cap at guanine N-7 and ribose 2'-O positions. Besides its role in RNA genome replication, also prevents the establishment of cellular antiviral state by blocking the interferon-alpha/beta (IFN-alpha/beta) signaling pathway. Inhibits host TYK2 and STAT2 phosphorylation, thereby preventing activation of JAK-STAT signaling pathway. May reduce immune responses by preventing the recruitment of the host PAF1 complex to interferon-responsive genes. The polypeptide is Genome polyprotein (Aedes aegypti (Yellowfever mosquito)).